A 1377-amino-acid polypeptide reads, in one-letter code: DNA-directed RNA polymerase subunit beta (1377 aa).

Belongs to the RNA polymerase beta chain family. In terms of assembly, the RNAP catalytic core consists of 2 alpha, 1 beta, 1 beta' and 1 omega subunit. When a sigma factor is associated with the core the holoenzyme is formed, which can initiate transcription.

The catalysed reaction is RNA(n) + a ribonucleoside 5'-triphosphate = RNA(n+1) + diphosphate. Functionally, DNA-dependent RNA polymerase catalyzes the transcription of DNA into RNA using the four ribonucleoside triphosphates as substrates. This Campylobacter lari (strain RM2100 / D67 / ATCC BAA-1060) protein is DNA-directed RNA polymerase subunit beta.